Here is an 87-residue protein sequence, read N- to C-terminus: Putative regulatory protein GK1166 (87 aa).

It belongs to the RemA family.

The chain is Putative regulatory protein GK1166 from Geobacillus kaustophilus (strain HTA426).